A 331-amino-acid polypeptide reads, in one-letter code: Cytosolic 5'-nucleotidase 3A (331 aa).

The active-site Nucleophile is the Asp-83. Residues Asp-83 and Asp-85 each coordinate Mg(2+). Residue Asp-85 is the Proton donor of the active site. Residue Glu-130 coordinates CMP. N(7)-methyl-GMP is bound by residues Glu-130 and Ser-151. Substrate contacts are provided by residues 198-200 (SAG) and Lys-247. Asp-272 contacts Mg(2+). A Phosphoserine modification is found at Ser-273.

Belongs to the pyrimidine 5'-nucleotidase family. Monomer. As to expression, isoform 2 is highly expressed in the brain, heart, spleen, kidney and blood. Isoform 2 is expressed (at protein level) in the spleen, skeletal muscle and gastrointestinal epithelia.

It is found in the cytoplasm. It catalyses the reaction N(7)-methyl-GMP + H2O = N(7)-methylguanosine + phosphate. It carries out the reaction a ribonucleoside 5'-phosphate + H2O = a ribonucleoside + phosphate. In terms of biological role, nucleotidase which shows specific activity towards cytidine monophosphate (CMP) and 7-methylguanosine monophosphate (m(7)GMP). CMP seems to be the preferred substrate. This is Cytosolic 5'-nucleotidase 3A (Nt5c3a) from Mus musculus (Mouse).